We begin with the raw amino-acid sequence, 97 residues long: ESAT-6-like protein EsxG (97 aa).

Ser2 carries the N-acetylserine modification.

The protein belongs to the WXG100 family. CFP-10 subfamily. As to quaternary structure, forms a tight 1:1 complex with EsxH.

The protein resides in the secreted. EsxG, in complex with EsxH, disrupts ESCRT function and impairs host phagosome maturation, thereby promoting intracellular bacterial growth. The complex acts by interacting, via EsxH, with the host hepatocyte growth factor-regulated tyrosine kinase substrate (HGS/HRS), a component of the ESCRT machinery. EsxG stabilizes EsxH in the host cytosol. This chain is ESAT-6-like protein EsxG, found in Mycobacterium tuberculosis (strain ATCC 25618 / H37Rv).